A 380-amino-acid polypeptide reads, in one-letter code: S-adenosylmethionine synthase (380 aa).

Position 15 (histidine 15) interacts with ATP. Residue aspartate 17 coordinates Mg(2+). Glutamate 43 serves as a coordination point for K(+). Glutamate 56 and glutamine 99 together coordinate L-methionine. A flexible loop region spans residues 99–109 (QSPDIAMGIDN). Residues 164–166 (DAK), 230–231 (RF), aspartate 239, 245–246 (RK), and lysine 266 contribute to the ATP site. Residue aspartate 239 coordinates L-methionine. Residue lysine 270 coordinates L-methionine.

The protein belongs to the AdoMet synthase family. Homotetramer; dimer of dimers. Mg(2+) serves as cofactor. It depends on K(+) as a cofactor.

It localises to the cytoplasm. It carries out the reaction L-methionine + ATP + H2O = S-adenosyl-L-methionine + phosphate + diphosphate. Its pathway is amino-acid biosynthesis; S-adenosyl-L-methionine biosynthesis; S-adenosyl-L-methionine from L-methionine: step 1/1. Functionally, catalyzes the formation of S-adenosylmethionine (AdoMet) from methionine and ATP. The overall synthetic reaction is composed of two sequential steps, AdoMet formation and the subsequent tripolyphosphate hydrolysis which occurs prior to release of AdoMet from the enzyme. This Rickettsia prowazekii (strain Madrid E) protein is S-adenosylmethionine synthase.